We begin with the raw amino-acid sequence, 490 residues long: Hexokinase (490 aa).

The Hexokinase domain occupies 21-466; the sequence is QNLLEHIKHF…SGVGAALIAA (446 aa). Positions 75–209 are hexokinase small subdomain; that stretch reads DGKETGTFLA…GLPIKVAALI (135 aa). The hexokinase large subdomain stretch occupies residues 210–455; the sequence is NDTTGTLIAS…DKVTIHAAED (246 aa).

This sequence belongs to the hexokinase family. Monomer.

It carries out the reaction a D-hexose + ATP = a D-hexose 6-phosphate + ADP + H(+). It catalyses the reaction D-fructose + ATP = D-fructose 6-phosphate + ADP + H(+). The catalysed reaction is D-glucose + ATP = D-glucose 6-phosphate + ADP + H(+). It functions in the pathway carbohydrate metabolism; hexose metabolism. It participates in carbohydrate degradation; glycolysis; D-glyceraldehyde 3-phosphate and glycerone phosphate from D-glucose: step 1/4. Functionally, catalyzes the phosphorylation of hexose, such as D-glucose and D-fructose, to hexose 6-phosphate (D-glucose 6-phosphate and D-fructose 6-phosphate, respectively). Mediates the initial step of glycolysis by catalyzing phosphorylation of D-glucose to D-glucose 6-phosphate. The sequence is that of Hexokinase (hxkA) from Emericella nidulans (strain FGSC A4 / ATCC 38163 / CBS 112.46 / NRRL 194 / M139) (Aspergillus nidulans).